Consider the following 255-residue polypeptide: Indole-3-glycerol phosphate synthase (255 aa).

Belongs to the TrpC family.

It catalyses the reaction 1-(2-carboxyphenylamino)-1-deoxy-D-ribulose 5-phosphate + H(+) = (1S,2R)-1-C-(indol-3-yl)glycerol 3-phosphate + CO2 + H2O. Its pathway is amino-acid biosynthesis; L-tryptophan biosynthesis; L-tryptophan from chorismate: step 4/5. The sequence is that of Indole-3-glycerol phosphate synthase from Streptococcus thermophilus (strain ATCC BAA-491 / LMD-9).